The following is a 355-amino-acid chain: Phosphoserine aminotransferase (355 aa).

Arg41 serves as a coordination point for L-glutamate. Pyridoxal 5'-phosphate-binding positions include 75–76 (AS), Trp99, Thr147, Asp166, and Gln189. Lys190 carries the N6-(pyridoxal phosphate)lysine modification. 231 to 232 (NT) is a binding site for pyridoxal 5'-phosphate.

It belongs to the class-V pyridoxal-phosphate-dependent aminotransferase family. SerC subfamily. In terms of assembly, homodimer. Pyridoxal 5'-phosphate serves as cofactor.

It localises to the cytoplasm. The enzyme catalyses O-phospho-L-serine + 2-oxoglutarate = 3-phosphooxypyruvate + L-glutamate. The catalysed reaction is 4-(phosphooxy)-L-threonine + 2-oxoglutarate = (R)-3-hydroxy-2-oxo-4-phosphooxybutanoate + L-glutamate. Its pathway is amino-acid biosynthesis; L-serine biosynthesis; L-serine from 3-phospho-D-glycerate: step 2/3. The protein operates within cofactor biosynthesis; pyridoxine 5'-phosphate biosynthesis; pyridoxine 5'-phosphate from D-erythrose 4-phosphate: step 3/5. Functionally, catalyzes the reversible conversion of 3-phosphohydroxypyruvate to phosphoserine and of 3-hydroxy-2-oxo-4-phosphonooxybutanoate to phosphohydroxythreonine. The chain is Phosphoserine aminotransferase from Bacteroides fragilis (strain ATCC 25285 / DSM 2151 / CCUG 4856 / JCM 11019 / LMG 10263 / NCTC 9343 / Onslow / VPI 2553 / EN-2).